Here is a 1024-residue protein sequence, read N- to C-terminus: NLR family CARD domain-containing protein 4 (1024 aa).

Residues 1 to 88 (MNFIKDNSRA…PLFQDLNGQS (88 aa)) enclose the CARD domain. The interval 95–298 (EGDLDDLAQD…QFGALTAEVG (204 aa)) is nucleotide-binding domain (NBD). In terms of domain architecture, NACHT spans 163-476 (SPCIIEGESG…VTKGNGYLQK (314 aa)). 169–176 (GESGKGKS) is a binding site for ATP. The segment at 356–463 (SHTQTTLFHT…RLSSLLTSHE (108 aa)) is winged-helix domain (WHD). Phosphoserine is present on serine 533. 12 LRR repeats span residues 578-598 (FFQG…LFDF), 656-679 (KQEF…DIRY), 735-758 (VTNL…LTDS), 762-785 (LKNL…KLAE), 787-812 (LKNL…DYIV), 824-847 (EIQL…LHNL), 848-870 (VKLS…ALHE), 878-902 (LEQL…LLKH), 911-933 (KLGL…FFGK), 936-963 (LKNF…VFEN), 965-985 (KQLV…ALVR), and 999-1021 (EARL…AFKL).

As to quaternary structure, homooligomer; homooligomerizes to induce formation of the NLRC4 inflammasome. Homooligomerizes following activation by pathogenic proteins. Component of the NLRC4 inflammasome, at least composed of NLRC4 and caspase-1 (CASP1). Some NLRC4 inflammasomes contain PYCARD/ASC, while some others directly contact and activate CASP1. Interacts (via CARD domain) with PYCARD/ASC, pro-caspase-1 (CASP1), NOD2, BCL10 and NALP1 (NAC) by CARD-CARD interaction. Interacts with EIF2AK2/PKR. Phosphorylated at Ser-533 following infection of macrophages with S.typhimurium (Salmonella). Phosphorylation is essential for NLRC4 inflammasome function to promote caspase-1 activation and pyroptosis. PRKCD phosphorylates Ser-533 in vitro. As to expression, isoform 2 is expressed ubiquitously, although highly expressed in lung and spleen. Isoform 1 is highly expressed in lung, followed by leukocytes especially monocytes, lymph node, colon, brain, prostate, placenta, spleen, bone marrow and fetal liver. Isoform 4 is only detected in brain.

Its subcellular location is the cytoplasm. The protein resides in the cytosol. The protein localises to the inflammasome. In terms of biological role, key component of inflammasomes that indirectly senses specific proteins from pathogenic bacteria and fungi and responds by assembling an inflammasome complex that promotes caspase-1 activation, cytokine production and macrophage pyroptosis. The NLRC4 inflammasome is activated as part of the innate immune response to a range of intracellular bacteria. This chain is NLR family CARD domain-containing protein 4 (NLRC4), found in Homo sapiens (Human).